A 417-amino-acid polypeptide reads, in one-letter code: Phosphoglycerate kinase (417 aa).

Residues V23, D24, F25, N26, Q38, R39, S62, H63, G65, R66, L121, R122, H169, and R170 each coordinate (2R)-3-phosphoglycerate. Position 213 (G213) interacts with ADP. G213 provides a ligand contact to CDP. AMP is bound by residues A214 and K215. Position 214 (A214) interacts with ATP. A214 serves as a coordination point for Mg(2+). Residue D218 participates in CDP binding. D218 contributes to the Mg(2+) binding site. K219 lines the AMP pocket. Residue K219 coordinates ATP. G237 serves as a coordination point for ADP. G237 provides a ligand contact to CDP. The AMP site is built by G238 and G312. ATP contacts are provided by G238 and G312. Residues G337 and F342 each coordinate CDP. F342 contacts ADP. Residue E343 coordinates AMP. Residues E343, D374, and T375 each contribute to the ATP site. Residue D374 participates in Mg(2+) binding.

It belongs to the phosphoglycerate kinase family. In terms of assembly, monomer. It depends on Mg(2+) as a cofactor.

Its subcellular location is the cytoplasm. It localises to the mitochondrion. The catalysed reaction is (2R)-3-phosphoglycerate + ATP = (2R)-3-phospho-glyceroyl phosphate + ADP. It functions in the pathway carbohydrate degradation; glycolysis; pyruvate from D-glyceraldehyde 3-phosphate: step 2/5. Functionally, catalyzes one of the two ATP producing reactions in the glycolytic pathway via the reversible conversion of 1,3-diphosphoglycerate to 3-phosphoglycerate. Both L- and D- forms of purine and pyrimidine nucleotides can be used as substrates, but the activity is much lower on pyrimidines. Negatively regulates the biosynthesis of acetyl-CoA from pyruvate in the mitochondrion. This is Phosphoglycerate kinase (PGK1) from Yarrowia lipolytica (strain CLIB 122 / E 150) (Yeast).